We begin with the raw amino-acid sequence, 450 residues long: Phosphoglucosamine mutase (450 aa).

Ser-101 functions as the Phosphoserine intermediate in the catalytic mechanism. Mg(2+) is bound by residues Ser-101, Asp-241, Asp-243, and Asp-245. The residue at position 101 (Ser-101) is a Phosphoserine.

This sequence belongs to the phosphohexose mutase family. Mg(2+) is required as a cofactor. Activated by phosphorylation.

It catalyses the reaction alpha-D-glucosamine 1-phosphate = D-glucosamine 6-phosphate. In terms of biological role, catalyzes the conversion of glucosamine-6-phosphate to glucosamine-1-phosphate. This Listeria monocytogenes serotype 4b (strain F2365) protein is Phosphoglucosamine mutase.